Reading from the N-terminus, the 146-residue chain is Chorion class A protein Ld3/Ld29 (146 aa).

An N-terminal signal peptide occupies residues 1–21 (MNTFALLSVFIQACLVQSVFS).

This sequence belongs to the chorion protein family.

This protein is one of many from the eggshell of the gypsy moth. The protein is Chorion class A protein Ld3/Ld29 of Lymantria dispar (Gypsy moth).